A 146-amino-acid chain; its full sequence is Hemoglobin subunit beta (146 aa).

Residue V1 is modified to N-acetylvaline. The Globin domain occupies 2-146 (HLSAEEKAAV…VANALAHKYH (145 aa)). T12 bears the Phosphothreonine mark. At S44 the chain carries Phosphoserine. At K59 the chain carries N6-acetyllysine. H63 serves as a coordination point for heme b. The residue at position 82 (K82) is an N6-acetyllysine. Position 92 (H92) interacts with heme b. C93 carries the post-translational modification S-nitrosocysteine. The residue at position 144 (K144) is an N6-acetyllysine.

It belongs to the globin family. Heterotetramer of two alpha chains and two beta chains. As to expression, red blood cells.

Its function is as follows. Involved in oxygen transport from the lung to the various peripheral tissues. The sequence is that of Hemoglobin subunit beta (HBB) from Ctenodactylus gundi (Northern gundi).